The sequence spans 187 residues: Frequenin-1 (187 aa).

The N-myristoyl glycine moiety is linked to residue Gly-2. EF-hand domains lie at 24–59 (EKEIRQWHKGFLKDCPNGLLTEQGFIKIYKQFFPQG), 60–95 (DPSKFASLVFRVFDENNDGSIEFEEFIRALSVTSKG), 96–131 (NLDEKLQWAFRLYDVDNDGYITREEMYNIVDAIYQM), and 143–178 (TPQKRVDKIFDQMDKNHDGKLTLEEFREGSKADPRI). Ca(2+) is bound by residues Asp-73, Asn-75, Asp-77, Ser-79, Glu-84, Asp-109, Asp-111, Asp-113, Tyr-115, Glu-120, Asp-156, Asn-158, Asp-160, Lys-162, and Glu-167.

This sequence belongs to the recoverin family. In contrast to Frq2, does not interact with ric8a. In terms of tissue distribution, enriched in synapses, such as the motor nerve endings at neuromuscular junctions. In the embryo, highly expressed in the ventral ganglia.

It is found in the cytoplasm. Ca(2+)-dependent modulation of synaptic efficacy. Also plays a role in axon terminal morphology. This is Frequenin-1 (Frq1) from Drosophila melanogaster (Fruit fly).